A 363-amino-acid polypeptide reads, in one-letter code: L-arabinitol 4-dehydrogenase (363 aa).

Residues Cys53, His78, Glu79, Cys108, Cys111, Cys114, Cys122, and Glu163 each coordinate Zn(2+). Residues Pro190–Ile191, Asp211, Arg216, Ile282, and Gln306–Arg308 contribute to the NAD(+) site.

Belongs to the zinc-containing alcohol dehydrogenase family. In terms of assembly, homotetramer. Zn(2+) is required as a cofactor.

The enzyme catalyses L-arabinitol + NAD(+) = L-xylulose + NADH + H(+). Its pathway is carbohydrate degradation; L-arabinose degradation via L-arabinitol; D-xylulose 5-phosphate from L-arabinose (fungal route): step 2/5. In terms of biological role, catalyzes the NAD-dependent oxidation of L-arabinitol to L-xylulose in the fungal L-arabinose catabolic pathway. L-arabinose catabolism is important for using plant material as a carbon source. Not active on D-arabinitol, D-sorbitol and D-mannitol. The sequence is that of L-arabinitol 4-dehydrogenase (ard-1) from Neurospora crassa (strain ATCC 24698 / 74-OR23-1A / CBS 708.71 / DSM 1257 / FGSC 987).